Reading from the N-terminus, the 144-residue chain is Protein MIX23 (144 aa).

Ala2 carries the post-translational modification N-acetylalanine. Positions 82–120 (VKNLREEREKNLDDLTLLKQLRKEQTKLKWMQSELNVEE) form a coiled coil. Residue Lys100 is modified to N6-acetyllysine.

This sequence belongs to the MIX23 family.

The protein is Protein MIX23 of Homo sapiens (Human).